We begin with the raw amino-acid sequence, 131 residues long: Large ribosomal subunit protein bL17 (131 aa).

The protein belongs to the bacterial ribosomal protein bL17 family. As to quaternary structure, part of the 50S ribosomal subunit. Contacts protein L32.

The protein is Large ribosomal subunit protein bL17 of Azoarcus sp. (strain BH72).